We begin with the raw amino-acid sequence, 329 residues long: G-protein coupled bile acid receptor 1 (329 aa).

Residues 1-15 (MMTPNSTELSAIPMG) are Extracellular-facing. N5 is a glycosylation site (N-linked (GlcNAc...) asparagine). Residues 16-36 (VLGLSLALASLIVIANLLLAL) traverse the membrane as a helical segment. The Cytoplasmic segment spans residues 37-49 (GIALDRHLRSPPA). A helical membrane pass occupies residues 50–70 (GCFFLSLLLAGLLTGLALPML). The Extracellular portion of the chain corresponds to 71–84 (PGLWSRNHQGYWSC). C84 and C154 are oxidised to a cystine. Residues 85–105 (LLLHLTPNFCFLSLLANLLLV) traverse the membrane as a helical segment. Residues 106–124 (HGERYMAVLQPLRPHGSVR) lie on the Cytoplasmic side of the membrane. A helical membrane pass occupies residues 125 to 145 (LALFLTWVSSLFFASLPALGW). The Extracellular portion of the chain corresponds to 146–164 (NHWSPDANCSSQAVFPAPY). N153 carries N-linked (GlcNAc...) asparagine glycosylation. A helical membrane pass occupies residues 165-185 (LYLEVYGLLLPAVGATALLSV). The Cytoplasmic portion of the chain corresponds to 186 to 229 (RVLATAHRQLCEIRRLERAVCRDVPSTLARALTWRQARAQAGAT). A helical transmembrane segment spans residues 230–250 (LLFLLCWGPYVATLLLSVLAY). At 251 to 260 (ERRPPLGPGT) the chain is on the extracellular side. A helical transmembrane segment spans residues 261-281 (LLSLISLGSTSAAAVPVAMGL). The Cytoplasmic portion of the chain corresponds to 282 to 329 (GDQRYTAPWRTAAQRCLRVLRGRAKRDNPGPSTAYHTSSQCSIDLDLN).

It belongs to the G-protein coupled receptor 1 family.

The protein localises to the cell membrane. Functionally, receptor for bile acid. Bile acid-binding induces its internalization, activation of extracellular signal-regulated kinase and intracellular cAMP production. May be involved in the suppression of macrophage functions by bile acids. Involved in bile acid promoted GLP1R secretion. This Mus musculus (Mouse) protein is G-protein coupled bile acid receptor 1 (Gpbar1).